The primary structure comprises 415 residues: Histidine--tRNA ligase (415 aa).

Belongs to the class-II aminoacyl-tRNA synthetase family. In terms of assembly, homodimer.

Its subcellular location is the cytoplasm. The enzyme catalyses tRNA(His) + L-histidine + ATP = L-histidyl-tRNA(His) + AMP + diphosphate + H(+). The chain is Histidine--tRNA ligase from Rickettsia bellii (strain RML369-C).